Reading from the N-terminus, the 873-residue chain is Zinc fingers and homeoboxes protein 1 (873 aa).

The disordered stretch occupies residues 1-63; that stretch reads MASRRKSTTP…ESVDSDNQQN (63 aa). Residues 18–30 show a composition bias toward acidic residues; the sequence is QDPDLELISDLDE. Thr-36 is subject to Phosphothreonine. Phosphoserine occurs at positions 45, 47, and 48. 2 C2H2-type zinc fingers span residues 70–93 and 102–125; these read YECKYCTFQTPDLNMFTFHVDSEH and YVCVECNFLTKRYDALSEHNLKYH. Lys-159 is covalently cross-linked (Glycyl lysine isopeptide (Lys-Gly) (interchain with G-Cter in SUMO2)). A Phosphoserine modification is found at Ser-202. The interval 202-236 is disordered; sequence SVEDVPEEKENEIKPDREEIVENPSSSASESNTST. Positions 212–221 are enriched in basic and acidic residues; that stretch reads NEIKPDREEI. Positions 223–236 are enriched in low complexity; it reads ENPSSSASESNTST. Residues 272-432 are required for dimerization; the sequence is NSNLIPKVLI…QNNVQKSQVP (161 aa). Residues 272–564 form a required for interaction with NFYA region; it reads NSNLIPKVLI…AQPKQSWNPF (293 aa). Residues 284–346 constitute a DNA-binding region (homeobox 1); that stretch reads NSIPTYNAAL…LKHGVSWTPE (63 aa). Residues Lys-441, Lys-454, Lys-485, and Lys-629 each participate in a glycyl lysine isopeptide (Lys-Gly) (interchain with G-Cter in SUMO2) cross-link. 2 consecutive DNA-binding regions (homeobox) follow at residues 464 to 526 and 569 to 630; these read SFGI…KSNQ and PQKF…EEKM. Disordered stretches follow at residues 626 to 667 and 732 to 769; these read KEEK…ICKK and SSMNGLSSLRKRGRGRPKGRGRGRPRGRPRGSKRINNW. At Ser-648 the chain carries Phosphoserine. Positions 660–722 form a DNA-binding region, homeobox 4; sequence STGKICKKTP…YAWKNGNLKW (63 aa). Residues 734–768 are required for nuclear localization; sequence MNGLSSLRKRGRGRPKGRGRGRPRGRPRGSKRINN. Positions 740–764 are enriched in basic residues; that stretch reads LRKRGRGRPKGRGRGRPRGRPRGSK. Ser-774 carries the post-translational modification Phosphoserine. Residues 777–832 constitute a DNA-binding region (homeobox 5); that stretch reads KFKTGTAILKDYYLKHKFLNEQDLDELVNKSHMGYEQVREWFAERQRRSELGIELF. The interval 829 to 873 is disordered; that stretch reads IELFEENEEEDEVIDDQEEDEEETDDSDTWEPPRHVKRKLSKSDD. Residues 831–857 show a composition bias toward acidic residues; the sequence is LFEENEEEDEVIDDQEEDEEETDDSDT. The required for repressor activity stretch occupies residues 831–873; that stretch reads LFEENEEEDEVIDDQEEDEEETDDSDTWEPPRHVKRKLSKSDD. Residues 863–873 are compositionally biased toward basic residues; it reads HVKRKLSKSDD.

This sequence belongs to the ZHX family. Forms homodimers. Also forms heterodimers with ZHX3 which is a prerequisite for repressor activity and with ZHX2. Interacts with NFYA. Interacts with ATF7IP.

The protein resides in the nucleus. In terms of biological role, acts as a transcriptional repressor. The chain is Zinc fingers and homeoboxes protein 1 (ZHX1) from Gorilla gorilla gorilla (Western lowland gorilla).